The sequence spans 676 residues: DNA ligase (676 aa).

Residues 1 to 10 are compositionally biased toward basic and acidic residues; the sequence is MTQAHHDDAG. Residues 1-23 form a disordered region; sequence MTQAHHDDAGARNALQGGLATDP. Residues 52–56 and 95–96 contribute to the NAD(+) site; these read DAAFD and SL. K148 serves as the catalytic N6-AMP-lysine intermediate. R169, E203, and K330 together coordinate NAD(+). Zn(2+) is bound by residues C420, C423, C436, and C441. Residues 593–676 enclose the BRCT domain; that stretch reads EAEGPLAGLT…DKLIAERRGG (84 aa).

The protein belongs to the NAD-dependent DNA ligase family. LigA subfamily. The cofactor is Mg(2+). It depends on Mn(2+) as a cofactor.

The catalysed reaction is NAD(+) + (deoxyribonucleotide)n-3'-hydroxyl + 5'-phospho-(deoxyribonucleotide)m = (deoxyribonucleotide)n+m + AMP + beta-nicotinamide D-nucleotide.. Its function is as follows. DNA ligase that catalyzes the formation of phosphodiester linkages between 5'-phosphoryl and 3'-hydroxyl groups in double-stranded DNA using NAD as a coenzyme and as the energy source for the reaction. It is essential for DNA replication and repair of damaged DNA. This Sorangium cellulosum (strain So ce56) (Polyangium cellulosum (strain So ce56)) protein is DNA ligase.